Here is a 224-residue protein sequence, read N- to C-terminus: Endonuclease NucS (224 aa).

This sequence belongs to the NucS endonuclease family.

It is found in the cytoplasm. In terms of biological role, cleaves both 3' and 5' ssDNA extremities of branched DNA structures. The polypeptide is Endonuclease NucS (Mycolicibacterium smegmatis (strain ATCC 700084 / mc(2)155) (Mycobacterium smegmatis)).